The chain runs to 96 residues: Dynein light chain roadblock-type 1 (96 aa).

Ala2 carries the post-translational modification N-acetylalanine.

This sequence belongs to the GAMAD family. As to quaternary structure, homodimer. The cytoplasmic dynein 1 complex consists of two catalytic heavy chains (HCs) and a number of non-catalytic subunits presented by intermediate chains (ICs), light intermediate chains (LICs) and light chains (LCs); the composition seems to vary in respect to the IC, LIC and LC composition. The heavy chain homodimer serves as a scaffold for the probable homodimeric assembly of the respective non-catalytic subunits. The ICs and LICs bind directly to the HC dimer and the LCs assemble on the IC dimer. Interacts with DYNLRB2. Interacts with DYNC1I1 and DYNC1I2. Interacts with RAB6A isoform 1 (GTP-bound); the interaction is direct. Interacts with RAB6A isoform 2 (GDP-bound); the interaction is direct. Interacts with RAB6B (GDP-bound).

The protein resides in the cytoplasm. It localises to the cytoskeleton. Acts as one of several non-catalytic accessory components of the cytoplasmic dynein 1 complex that are thought to be involved in linking dynein to cargos and to adapter proteins that regulate dynein function. Cytoplasmic dynein 1 acts as a motor for the intracellular retrograde motility of vesicles and organelles along microtubules. This is Dynein light chain roadblock-type 1 (Dynlrb1) from Mus musculus (Mouse).